Here is a 110-residue protein sequence, read N- to C-terminus: Phosphoribosyl-ATP pyrophosphatase (110 aa).

This sequence belongs to the PRA-PH family.

Its subcellular location is the cytoplasm. It carries out the reaction 1-(5-phospho-beta-D-ribosyl)-ATP + H2O = 1-(5-phospho-beta-D-ribosyl)-5'-AMP + diphosphate + H(+). The protein operates within amino-acid biosynthesis; L-histidine biosynthesis; L-histidine from 5-phospho-alpha-D-ribose 1-diphosphate: step 2/9. The sequence is that of Phosphoribosyl-ATP pyrophosphatase from Pseudomonas syringae pv. tomato (strain ATCC BAA-871 / DC3000).